The following is a 331-amino-acid chain: ATP-dependent 6-phosphofructokinase (331 aa).

An ATP-binding site is contributed by Gly12. Residues 22-26 and 55-60 contribute to the ADP site; these read RGVVR and RYSVSD. ATP-binding positions include 73-74 and 103-106; these read RF and GDGS. Mg(2+) is bound at residue Asp104. 127-129 provides a ligand contact to substrate; that stretch reads TID. Asp129 serves as the catalytic Proton acceptor. Arg156 is a binding site for ADP. Residues Arg164 and 171-173 each bind substrate; that span reads MGR. ADP-binding positions include 187–189, Lys213, and 215–217; these read GCE and KKH. Substrate is bound by residues Glu224, Arg245, and 251–254; that span reads HIQR.

This sequence belongs to the phosphofructokinase type A (PFKA) family. ATP-dependent PFK group I subfamily. Prokaryotic clade 'B1' sub-subfamily. Homotetramer. Mg(2+) is required as a cofactor.

The protein resides in the cytoplasm. It catalyses the reaction beta-D-fructose 6-phosphate + ATP = beta-D-fructose 1,6-bisphosphate + ADP + H(+). It functions in the pathway carbohydrate degradation; glycolysis; D-glyceraldehyde 3-phosphate and glycerone phosphate from D-glucose: step 3/4. Allosterically activated by ADP and other diphosphonucleosides, and allosterically inhibited by phosphoenolpyruvate. Its function is as follows. Catalyzes the phosphorylation of D-fructose 6-phosphate to fructose 1,6-bisphosphate by ATP, the first committing step of glycolysis. The protein is ATP-dependent 6-phosphofructokinase of Yersinia enterocolitica serotype O:8 / biotype 1B (strain NCTC 13174 / 8081).